The primary structure comprises 113 residues: Con-Ins G3 (113 aa).

Residues 1 to 21 form the signal peptide; that stretch reads MTTSFYFLLVALGLLLYVCQS. Positions 22–29 are excised as a propeptide; it reads SFGNQHTR. A 4-hydroxyproline; partial modification is found at Pro34. Intrachain disulfides connect Cys38–Cys99, Cys50–Cys112, and Cys98–Cys103. Glu41 is subject to 4-carboxyglutamate. Residue His51 is modified to Histidine amide. Positions 52–92 are cleaved as a propeptide — c peptide; it reads GKRNDAGKKRGRASPLWQRQGFLSMLKAKRNEAFFLQRDGR. Glu96 is subject to 4-carboxyglutamate. Pro102 carries the 4-hydroxyproline; partial modification.

Belongs to the insulin family. In terms of assembly, heterodimer of A and B chains; disulfide-linked. Post-translationally, it is noteworthy that in this dimer, in contrast to Con-Ins G1, the chain B is amidated and not the chain A. As to expression, expressed by the venom gland.

Its subcellular location is the secreted. Functionally, this venom insulin, from a fish-hunting cone snail, facilitates prey capture by rapidly inducing hypoglycemic shock. It is one of the smallest known insulin found in nature and lacks the C-terminal segment of the B chain that, in human insulin, mediates engagement of the insulin receptor (INSR) and assembly of the hormone's hexameric storage form. Despite lacking this segment, it both binds and activates human insulin receptor (long isoform (HIR-B)) with a high potency (EC(50)=242 nM). In vivo, intraperitoneal injection of this peptide into zebrafish lowers blood glucose with a lower potency than human insulin. In addition, when applied to water, this peptide reduces overall locomotor activity of zebrafish larvae, observed as a significant decrease in the percentage of time spent swimming and movement frequency. When tested on a mouse model of diabetes, this insulin also lowers blood glucose with a 10-fold lower potency than human insulin. In Conus geographus (Geography cone), this protein is Con-Ins G3.